Reading from the N-terminus, the 643-residue chain is MEKSSSCESLGSQPAVARPPSVDSLSSASTSHSENSVHTKSASVVSSDSISTSAENFSPDLRVLRESNKLAEMEEPPLLPGENIKDMAKDVTYICPFTGAVRGTLTVTNYRLYFKSMERDPPFVLDASLGVISRVEKIGGASSRGENSYGLETVCKDIRNLRFAHKPEGRTRRSIFENLMKYAFPVSNNLSLFAFEYKEVFPENGWKLYDSLSEYRRQGIPNESWRITKVNERYELCDTYPALLVVPANIPDEELKRVASFRSRGRIPVLSWIHPESQATITRCSQPMVGVSGKRSKEDEKYLQAIMDSNAQSHKIFIFDARPSVNAVANKAKGGGYESEDAYQNAELVFLDIHNIHVMRESLRKLKEIVYPNIEETHWLSNLESTHWLEHIKLILAGALRIADRVESGKTSVVVHCSDGWDRTAQLTSLAMLMLDGYYRTIRGFEVLVEKEWLSFGHRFQLRVGHGDKNHADADRSPVFLQFIDCVWQMTRQFPTAFEFNEYFLITILDHLYSCLFGTFLCNSEQQRGKENLPRRTVSLWSYINSQLEDFTNPLYGSYSNHVLYPVASMRHLELWVGYYVRWNPRMKPQEPIHNRYKELLAKRAELQKKVEELQREISNRSTSSSERAGSPAQCVTPVQTVV.

2 stretches are compositionally biased toward polar residues: residues 1 to 12 and 23 to 40; these read MEKSSSCESLGS and DSLS…VHTK. A disordered region spans residues 1-54; it reads MEKSSSCESLGSQPAVARPPSVDSLSSASTSHSENSVHTKSASVVSSDSISTSA. 2 positions are modified to phosphoserine: S6 and S9. A compositionally biased stretch (low complexity) spans 41 to 54; that stretch reads SASVVSSDSISTSA. The residue at position 58 (S58) is a Phosphoserine. Residues 68–139 form the GRAM domain; that stretch reads NKLAEMEEPP…GVISRVEKIG (72 aa). The Myotubularin phosphatase domain maps to 205–580; the sequence is GWKLYDSLSE…RHLELWVGYY (376 aa). The a 1,2-diacyl-sn-glycero-3-phospho-(1D-myo-inositol-3,5-bisphosphate) site is built by N330, N355, and I356. A 1,2-diacyl-sn-glycero-3-phospho-(1D-myo-inositol-3-phosphate)-binding residues include N330, N355, and I356. C417 (phosphocysteine intermediate) is an active-site residue. A 1,2-diacyl-sn-glycero-3-phospho-(1D-myo-inositol-3,5-bisphosphate) contacts are provided by S418, D419, G420, W421, D422, R423, R459, and R463. S418, D419, G420, W421, D422, and R423 together coordinate a 1,2-diacyl-sn-glycero-3-phospho-(1D-myo-inositol-3-phosphate). R463 is an a 1,2-diacyl-sn-glycero-3-phospho-(1D-myo-inositol-3-phosphate) binding site. Residues 593-627 are a coiled coil; sequence IHNRYKELLAKRAELQKKVEELQREISNRSTSSSE. Residues 614–643 are disordered; the sequence is LQREISNRSTSSSERAGSPAQCVTPVQTVV.

The protein belongs to the protein-tyrosine phosphatase family. Non-receptor class myotubularin subfamily. Homodimer (via coiled-coil domain). Heterotetramer consisting of one MTMR2 dimer and one SBF2/MTMR13 dimer; specifically in peripheral nerves stabilizes SBF2/MTMR13 at the membranes and increases MTMR2 catalytic activity towards phosphatidylinositol 3,5-bisphosphate and to a lesser extent towards phosphatidylinositol 3-phosphate. Heterodimer with SBF1/MTMR5; acts as an adapter for the phosphatase MTMR2 to regulate MTMR2 catalytic activity and subcellular location. Heterodimer with MTMR12. Post-translationally, phosphorylation at Ser-58 decreases MTMR2 localization to endocytic vesicular structures.

It is found in the cytoplasm. The protein resides in the early endosome membrane. It localises to the perinuclear region. The protein localises to the cell projection. Its subcellular location is the axon. It is found in the endosome membrane. It catalyses the reaction a 1,2-diacyl-sn-glycero-3-phospho-(1D-myo-inositol-3,5-bisphosphate) + H2O = a 1,2-diacyl-sn-glycero-3-phospho-(1D-myo-inositol-5-phosphate) + phosphate. It carries out the reaction a 1,2-diacyl-sn-glycero-3-phospho-(1D-myo-inositol-3-phosphate) + H2O = a 1,2-diacyl-sn-glycero-3-phospho-(1D-myo-inositol) + phosphate. The enzyme catalyses 1,2-dioctanoyl-sn-glycero-3-phospho-(1-D-myo-inositol-3-phosphate) + H2O = 1,2-dioctanoyl-sn-glycero-3-phospho-(1D-myo-inositol) + phosphate. The catalysed reaction is 1,2-dioctanoyl-sn-glycero-3-phospho-(1D-myo-inositol-3,5-bisphosphate) + H2O = 1,2-dioctanoyl-sn-glycero-3-phospho-(1D-myo-inositol-5-phosphate) + phosphate. Functionally, lipid phosphatase that specifically dephosphorylates the D-3 position of phosphatidylinositol 3-phosphate and phosphatidylinositol 3,5-bisphosphate, generating phosphatidylinositol and phosphatidylinositol 5-phosphate. Regulates the level of these phosphoinositides critical for various biological processes including autophagy initiation and autophagosome maturation. This Bos taurus (Bovine) protein is Phosphatidylinositol-3,5-bisphosphate 3-phosphatase MTMR2.